Consider the following 238-residue polypeptide: Sugar fermentation stimulation protein homolog (238 aa).

Belongs to the SfsA family.

This is Sugar fermentation stimulation protein homolog from Haemophilus influenzae (strain 86-028NP).